The sequence spans 327 residues: DNA-directed RNA polymerase subunit alpha (327 aa).

The tract at residues 1 to 233 (MQGSVTEFLK…EQLEAFVDLR (233 aa)) is alpha N-terminal domain (alpha-NTD). An alpha C-terminal domain (alpha-CTD) region spans residues 247–327 (FDPVLLRPVD…NWPPLGFIDK (81 aa)).

Belongs to the RNA polymerase alpha chain family. Homodimer. The RNAP catalytic core consists of 2 alpha, 1 beta, 1 beta' and 1 omega subunit. When a sigma factor is associated with the core the holoenzyme is formed, which can initiate transcription.

The catalysed reaction is RNA(n) + a ribonucleoside 5'-triphosphate = RNA(n+1) + diphosphate. In terms of biological role, DNA-dependent RNA polymerase catalyzes the transcription of DNA into RNA using the four ribonucleoside triphosphates as substrates. This chain is DNA-directed RNA polymerase subunit alpha, found in Baumannia cicadellinicola subsp. Homalodisca coagulata.